The primary structure comprises 538 residues: Xylosidase/arabinosidase 43B (538 aa).

Glu367 serves as the catalytic Proton donor.

It belongs to the glycosyl hydrolase 43 family.

The enzyme catalyses Hydrolysis of (1-&gt;4)-beta-D-xylans, to remove successive D-xylose residues from the non-reducing termini.. It catalyses the reaction Hydrolysis of terminal non-reducing alpha-L-arabinofuranoside residues in alpha-L-arabinosides.. With respect to regulation, activity is inhibited by Ag(+), Li(+), Cu(2+), Cr(3+), Co(3+), Ni(2+), Mg(2+), Zn(2+), EDTA, SDS and beta-mercaptoethanol; but not by Mn(2+), Pb(2+), Ca(2+) and Fe(3+). Bifunctional beta-xylosidase/alpha-L-arabinosidases with a low level of xylanase activity. Is most active on 4-nitrophenyl beta-D-xylopyranoside (pNPX) (defined as 100%), moderate on p-nitrophenyl-alpha-L-arabinofuranoside (pNPA) (56.6%), and weak on beechwood xylan (5.7%) and birchwood xylan (2.7%). Is able to attack xylooligosacchardies with degrees of polymerisation of 2-5, releasing the amounts of reducing sugars in the order of xylopentose &gt; xylotetraose &gt; xylotriose &gt; xylobiose, i.e. the rate of xylose released from xylooligosacchardies increased with the chain length. No activity was detected in the presence of carboxymethyl cellulose-sodium (CMC-Na), sugar beet arabinan, AZCL-arabinan (debranched), 4-nitrophenyl a-D - galactopyranoside, 2-nitrophenyl beta-D-galactopyranoside, and 4-nitrophenyl alpha-D-glucopyranoside. This is Xylosidase/arabinosidase 43B from Humicola insolens (Soft-rot fungus).